The following is a 236-amino-acid chain: (5-formylfuran-3-yl)methyl phosphate synthase (236 aa).

Lys27 acts as the Schiff-base intermediate with substrate in catalysis. The active-site Proton acceptor is the Lys85.

It belongs to the MfnB family.

It catalyses the reaction 2 D-glyceraldehyde 3-phosphate = 4-(hydroxymethyl)-2-furancarboxaldehyde phosphate + phosphate + 2 H2O. Its pathway is cofactor biosynthesis; methanofuran biosynthesis. In terms of biological role, catalyzes the formation of 4-(hydroxymethyl)-2-furancarboxaldehyde phosphate (4-HFC-P) from two molecules of glyceraldehyde-3-P (GA-3-P). In Methanococcus maripaludis (strain C6 / ATCC BAA-1332), this protein is (5-formylfuran-3-yl)methyl phosphate synthase.